Consider the following 379-residue polypeptide: Chaperone protein DnaJ (379 aa).

Residues 4–69 (DLYETLGVKK…QKRAAYDRYG (66 aa)) form the J domain. The CR-type zinc-finger motif lies at 137 to 215 (GKTAQIRVPT…CHGQGRVTEE (79 aa)). Residues Cys-150, Cys-153, Cys-167, Cys-170, Cys-189, Cys-192, Cys-203, and Cys-206 each coordinate Zn(2+). CXXCXGXG motif repeat units follow at residues 150–157 (CDVCTGSG), 167–174 (CATCQGSG), 189–196 (CPTCGGRG), and 203–210 (CTKCHGQG).

This sequence belongs to the DnaJ family. In terms of assembly, homodimer. Zn(2+) serves as cofactor.

It is found in the cytoplasm. Functionally, participates actively in the response to hyperosmotic and heat shock by preventing the aggregation of stress-denatured proteins and by disaggregating proteins, also in an autonomous, DnaK-independent fashion. Unfolded proteins bind initially to DnaJ; upon interaction with the DnaJ-bound protein, DnaK hydrolyzes its bound ATP, resulting in the formation of a stable complex. GrpE releases ADP from DnaK; ATP binding to DnaK triggers the release of the substrate protein, thus completing the reaction cycle. Several rounds of ATP-dependent interactions between DnaJ, DnaK and GrpE are required for fully efficient folding. Also involved, together with DnaK and GrpE, in the DNA replication of plasmids through activation of initiation proteins. The polypeptide is Chaperone protein DnaJ (Sinorhizobium fredii (strain NBRC 101917 / NGR234)).